A 153-amino-acid polypeptide reads, in one-letter code: 3-hydroxyacyl-[acyl-carrier-protein] dehydratase FabZ (153 aa).

The active site involves His-57.

This sequence belongs to the thioester dehydratase family. FabZ subfamily.

Its subcellular location is the cytoplasm. The enzyme catalyses a (3R)-hydroxyacyl-[ACP] = a (2E)-enoyl-[ACP] + H2O. In terms of biological role, involved in unsaturated fatty acids biosynthesis. Catalyzes the dehydration of short chain beta-hydroxyacyl-ACPs and long chain saturated and unsaturated beta-hydroxyacyl-ACPs. The polypeptide is 3-hydroxyacyl-[acyl-carrier-protein] dehydratase FabZ (Xanthomonas oryzae pv. oryzae (strain MAFF 311018)).